Reading from the N-terminus, the 209-residue chain is Prolactin (209 aa).

Positions 1–24 (MAQRFKGRSLFLTALLCLASQGYA) are cleaved as a signal peptide. 2 disulfide bridges follow: Cys70-Cys184 and Cys201-Cys209.

This sequence belongs to the somatotropin/prolactin family.

The protein resides in the secreted. The sequence is that of Prolactin (prl) from Anguilla anguilla (European freshwater eel).